Here is a 476-residue protein sequence, read N- to C-terminus: Raffinose invertase (476 aa).

Residues 35-38 (WMND), Gln54, 97-98 (FS), 159-160 (RD), Glu214, and Trp297 contribute to the substrate site. Residue Asp38 is part of the active site.

It belongs to the glycosyl hydrolase 32 family. Homodimer.

The enzyme catalyses Hydrolysis of terminal non-reducing beta-D-fructofuranoside residues in beta-D-fructofuranosides.. May prevent the potential hasard of excessive sucrose accumulation. The polypeptide is Raffinose invertase (rafD) (Escherichia coli).